Consider the following 384-residue polypeptide: 5-cytosine rRNA methyltransferase NSUN4 (384 aa).

Residues methionine 1–glutamine 25 constitute a mitochondrion transit peptide. S-adenosyl-L-methionine-binding residues include glycine 185, glycine 186, lysine 187, and aspartate 204. Serine 206 bears the Phosphoserine mark. Residues arginine 209, aspartate 237, glycine 238, and aspartate 255 each contribute to the S-adenosyl-L-methionine site. Cysteine 310 functions as the Nucleophile in the catalytic mechanism.

It belongs to the class I-like SAM-binding methyltransferase superfamily. RsmB/NOP family. Heterodimer with MTERFD2/MTERF4; this interaction seems to be required for NSUN4 recruitment to the mitochondrial large ribosomal subunit.

Its subcellular location is the mitochondrion. It carries out the reaction a cytidine in rRNA + S-adenosyl-L-methionine = a 5-methylcytidine in rRNA + S-adenosyl-L-homocysteine + H(+). It catalyses the reaction a cytidine in mRNA + S-adenosyl-L-methionine = a 5-methylcytidine in mRNA + S-adenosyl-L-homocysteine + H(+). Its function is as follows. Mitochondrial RNA cytosine C(5)-methyltransferase that methylates cytosine to 5-methylcytosine (m5C) in various RNAs, such as rRNAs, mRNAs and some long non-coding RNAs (lncRNAs). Involved in mitochondrial ribosome small subunit (SSU) maturation by catalyzing methylation of mitochondrial 12S rRNA; the function is independent of MTERFD2/MTERF4 and assembled mitochondrial ribosome large subunit (LSU). Targeted to LSU by MTERFD2/MTERF4 and probably is involved in a final step in ribosome biogenesis to ensure that SSU and LSU are assembled. In vitro can methylate 16S rRNA of the LSU; the methylation is enhanced by MTERFD/MTERF4. Also acts as a regulator of innate immunity by marking double-stranded mitochondrial RNAs(mt-dsRNAs) generated in response to stress: catalyzes m5C modification on mitochondrial RNAs, such as a mRNAs and lncRNAs, with a preference for the termini of light-strand lncRNAs, promoting their degradation and cytosolic release. Modified light-strand lncRNAs are then recognized by C1QBP reader and recruited to the mitochondrial degradosome complex, which promotes their degradation. This chain is 5-cytosine rRNA methyltransferase NSUN4 (NSUN4), found in Bos taurus (Bovine).